The following is a 382-amino-acid chain: Gap junction alpha-1 protein (382 aa).

Topologically, residues 2-23 (GDWSALGKLLDKVQAYSTAGGK) are cytoplasmic. Phosphoserine is present on Ser5. Residues 24–44 (VWLSVLFIFRILLLGTAVESA) form a helical membrane-spanning segment. The Extracellular portion of the chain corresponds to 45–76 (WGDEQSAFRCNTQQPGCENVCYDKSFPISHVR). 2 disulfide bridges follow: Cys54–Cys192 and Cys187–Cys198. A helical transmembrane segment spans residues 77–97 (FWVLQIIFVSVPTLLYLAHVF). The Cytoplasmic segment spans residues 98–155 (YVMRKEEKLNKKEEELKVAQTDGVNVEMHLKQIEIKKFKYGIEEHGKVKMRGGLLRTY). Residue Lys144 forms a Glycyl lysine isopeptide (Lys-Gly) (interchain with G-Cter in SUMO) linkage. The chain crosses the membrane as a helical span at residues 156–176 (IISILFKSVFEVAFLLIQWYI). Topologically, residues 177–207 (YGFSLSAVYTCKRDPCPHQVDCFLSRPTEKT) are extracellular. Residues 208-228 (IFIIFMLVVSLVSLALNIIEL) traverse the membrane as a helical segment. Topologically, residues 229–382 (FYVFFKGVKD…SRPRPDDLEI (154 aa)) are cytoplasmic. Lys237 is covalently cross-linked (Glycyl lysine isopeptide (Lys-Gly) (interchain with G-Cter in SUMO)). The tract at residues 244–382 (SDPYHATTGP…SRPRPDDLEI (139 aa)) is interaction with NOV. Position 247 is a phosphotyrosine (Tyr247). Residues Ser255, Ser257, and Ser262 each carry the phosphoserine modification. The segment at 264–382 (KYAYFNGCSS…SRPRPDDLEI (119 aa)) is interaction with UBQLN4. The residue at position 271 (Cys271) is an S-nitrosocysteine. Thr275 is subject to Phosphothreonine. Phosphoserine occurs at positions 306, 314, and 325. Polar residues predominate over residues 317-332 (QNRMGQAGSTISNSHA). Positions 317–382 (QNRMGQAGST…SRPRPDDLEI (66 aa)) are disordered. Residue Thr326 is modified to Phosphothreonine. A phosphoserine mark is found at Ser328, Ser330, Ser341, and Ser365. Low complexity predominate over residues 362-374 (RPSSRASSRASSR). Residue Ser368 is modified to Phosphoserine; by PKC/PRKCG and PKC/PRKCD. Phosphoserine is present on residues Ser369 and Ser373.

Belongs to the connexin family. Alpha-type (group II) subfamily. A connexon is composed of a hexamer of connexins. Interacts with CSNK1D. Interacts with RIC1/CIP150. Interacts (via C-terminus) with TJP1. Interacts (via C-terminus) with SRC (via SH3 domain). Interacts (not ubiquitinated) with UBQLN4 (via UBA domain). Interacts with CNST. Interacts with SGSM3. Interacts with NOV. Interacts with TMEM65. Interacts with ANK3/ANKG and PKP2. Phosphorylation at Ser-325, Ser-328 and Ser-330 by CK1 modulates gap junction assembly. Phosphorylated at Ser-368 by PRKCG; phosphorylation induces disassembly of gap junction plaques and inhibition of gap junction activity. Phosphorylation at Ser-368 by PRKCD triggers its internalization into small vesicles leading to proteasome-mediated degradation. Post-translationally, sumoylated with SUMO1, SUMO2 and SUMO3, which may regulate the level of functional Cx43 gap junctions at the plasma membrane. May be desumoylated by SENP1 or SENP2. In terms of processing, acetylated in the developing cortex; leading to delocalization from the cell membrane. S-nitrosylation at Cys-271 is enriched at the muscle endothelial gap junction in arteries, it augments channel permeability and may regulate of smooth muscle cell to endothelial cell communication. In terms of tissue distribution, expressed in heart, non-sensory epithelial cells, and in fibrocytes of the spiral ligament and the spiral limbus. Expressed in bladder smooth muscle cells (at protein level). Expressed in astrocytes (at protein level).

The protein localises to the cell membrane. The protein resides in the cell junction. It is found in the gap junction. It localises to the endoplasmic reticulum. Gap junction protein that acts as a regulator of bladder capacity. A gap junction consists of a cluster of closely packed pairs of transmembrane channels, the connexons, through which materials of low MW diffuse from one cell to a neighboring cell. Negative regulator of bladder functional capacity: acts by enhancing intercellular electrical and chemical transmission, thus sensitizing bladder muscles to cholinergic neural stimuli and causing them to contract. May play a role in cell growth inhibition through the regulation of NOV expression and localization. Plays an essential role in gap junction communication in the ventricles. Its function is as follows. Connexin 43 is possibly the ATP-induced pore of mouse macrophages. The polypeptide is Gap junction alpha-1 protein (Gja1) (Mus musculus (Mouse)).